Here is a 378-residue protein sequence, read N- to C-terminus: Succinyl-diaminopimelate desuccinylase (378 aa).

His-77 provides a ligand contact to Zn(2+). The active site involves Asp-79. Asp-108 provides a ligand contact to Zn(2+). Glu-138 acts as the Proton acceptor in catalysis. Zn(2+) contacts are provided by Glu-139, Glu-167, and His-350.

Belongs to the peptidase M20A family. DapE subfamily. As to quaternary structure, homodimer. Zn(2+) serves as cofactor. The cofactor is Co(2+).

The enzyme catalyses N-succinyl-(2S,6S)-2,6-diaminopimelate + H2O = (2S,6S)-2,6-diaminopimelate + succinate. It participates in amino-acid biosynthesis; L-lysine biosynthesis via DAP pathway; LL-2,6-diaminopimelate from (S)-tetrahydrodipicolinate (succinylase route): step 3/3. Its function is as follows. Catalyzes the hydrolysis of N-succinyl-L,L-diaminopimelic acid (SDAP), forming succinate and LL-2,6-diaminopimelate (DAP), an intermediate involved in the bacterial biosynthesis of lysine and meso-diaminopimelic acid, an essential component of bacterial cell walls. The polypeptide is Succinyl-diaminopimelate desuccinylase (Erythrobacter litoralis (strain HTCC2594)).